The sequence spans 687 residues: Ferric transport system permease protein FbpB (687 aa).

The next 19 helical transmembrane spans lie at 10–30 (LFESSHFWILLSLIAFIALPS), 50–70 (GWSSVNLTILWFLPLIGFWLL), 85–105 (LGLISFILLFAFISATIYKVS), 106–126 (MGYSVIVLIATLTALATFAFA), 141–161 (LLSIILLIFFFIVYPTVAIFI), 192–212 (LFLSGFVGIVSTVFGLAFALY), 226–246 (IFSILPIVTPPFVVGLGVTLM), 271–291 (GFNGIAIAQILAFAPISFMIL), 318–338 (YNIIFPLLRPALANSFLIVFI), 347–367 (PLVLGGSFDVIATQIYFYIAG), 378–398 (LGSMLLIFSLLIFIVQYMWIG), 425–445 (IIVMLGFWVVFNFALYGSIFY), 450–472 (VNWGVDYTLTLNNYAMLFGQGLS), 484–504 (IYAGIAAPLTALFGLLIAYIV), 517–537 (FLTMLCFAVPGTVAGVSYILA), 538–558 (FNDAPMYITGTGIIIIISMVM), 594–614 (IWFIVFPLLKPALLSALVTSF), 620–640 (TVSAIVFLVTADTRVATAYIL), and 649–669 (GVAIAYGSILIVVMMAIILFF). The ABC transmembrane type-1 1 domain maps to 188–393 (ISNSLFLSGF…IFSLLIFIVQ (206 aa)). The ABC transmembrane type-1 2 domain occupies 479–669 (LINTMIYAGI…VVMMAIILFF (191 aa)).

This sequence belongs to the binding-protein-dependent transport system permease family. FbpB subfamily. The complex is composed of two ATP-binding proteins (FbpC), two transmembrane proteins (FbpB) and a solute-binding protein (FbpA).

It localises to the cell inner membrane. Part of the ABC transporter complex FbpABC (TC 3.A.1.10.1) involved in Fe(3+) ions import. Probably responsible for the translocation of the substrate across the membrane. This Actinobacillus pleuropneumoniae (Haemophilus pleuropneumoniae) protein is Ferric transport system permease protein FbpB (fbpB).